Reading from the N-terminus, the 498-residue chain is 4-aminobutyrate aminotransferase (498 aa).

Pyridoxal 5'-phosphate is bound at residue 164–165 (GS). Residue arginine 222 participates in substrate binding. Position 356 is an N6-(pyridoxal phosphate)lysine (lysine 356). Threonine 381 is a pyridoxal 5'-phosphate binding site.

This sequence belongs to the class-III pyridoxal-phosphate-dependent aminotransferase family. As to quaternary structure, homodimer. The cofactor is pyridoxal 5'-phosphate.

It is found in the cytoplasm. It carries out the reaction 4-aminobutanoate + 2-oxoglutarate = succinate semialdehyde + L-glutamate. Its function is as follows. Deaminates gamma-aminobutyric acid (GABA) to succinate-semialdehyde, which in turn is converted to succinate by the succinate semialdehyde dehydrogenase. Required for the degradation of GABA, which is important for utilization of GABA as nitrogen source. In Emericella nidulans (strain FGSC A4 / ATCC 38163 / CBS 112.46 / NRRL 194 / M139) (Aspergillus nidulans), this protein is 4-aminobutyrate aminotransferase (gatA).